Reading from the N-terminus, the 649-residue chain is Threonine--tRNA ligase (649 aa).

Residues Met1 to Thr61 form the TGS domain. The segment at Asp242 to Pro540 is catalytic. Zn(2+) contacts are provided by Cys336, His387, and His517.

Belongs to the class-II aminoacyl-tRNA synthetase family. In terms of assembly, homodimer. Requires Zn(2+) as cofactor.

Its subcellular location is the cytoplasm. The enzyme catalyses tRNA(Thr) + L-threonine + ATP = L-threonyl-tRNA(Thr) + AMP + diphosphate + H(+). Catalyzes the attachment of threonine to tRNA(Thr) in a two-step reaction: L-threonine is first activated by ATP to form Thr-AMP and then transferred to the acceptor end of tRNA(Thr). Also edits incorrectly charged L-seryl-tRNA(Thr). This chain is Threonine--tRNA ligase, found in Streptococcus mutans serotype c (strain ATCC 700610 / UA159).